The following is a 508-amino-acid chain: UDP-N-acetylmuramyl-tripeptide synthetase (508 aa).

Serine 35 provides a ligand contact to UDP-N-acetyl-alpha-D-muramoyl-L-alanyl-D-glutamate. Glycine 118–serine 124 contributes to the ATP binding site. Residues serine 163–threonine 164, threonine 190, and arginine 200 each bind UDP-N-acetyl-alpha-D-muramoyl-L-alanyl-D-glutamate. Lysine 232 carries the post-translational modification N6-carboxylysine.

The protein belongs to the MurCDEF family. MurE subfamily. Post-translationally, carboxylation is probably crucial for Mg(2+) binding and, consequently, for the gamma-phosphate positioning of ATP.

The protein localises to the cytoplasm. It functions in the pathway cell wall biogenesis; peptidoglycan biosynthesis. Catalyzes the addition of an amino acid to the nucleotide precursor UDP-N-acetylmuramoyl-L-alanyl-D-glutamate (UMAG) in the biosynthesis of bacterial cell-wall peptidoglycan. The sequence is that of UDP-N-acetylmuramyl-tripeptide synthetase from Borrelia garinii subsp. bavariensis (strain ATCC BAA-2496 / DSM 23469 / PBi) (Borreliella bavariensis).